The primary structure comprises 1355 residues: Probable major glycoprotein (1355 aa).

An N-terminal signal peptide occupies residues 1–16 (MKKTMLAIILIPLVYA). Asn-81, Asn-112, Asn-129, Asn-169, Asn-173, Asn-192, Asn-542, Asn-655, Asn-682, Asn-744, Asn-780, Asn-811, Asn-815, Asn-860, Asn-865, Asn-882, Asn-895, Asn-1213, Asn-1225, Asn-1267, and Asn-1274 each carry an N-linked (GlcNAc...) asparagine; by host glycan. Residues 1245 to 1299 (QIVSMEMEIQDLKLELIQLQKINTSVHMENITGDIDAMKATIEEYRAEMAKLRVT) adopt a coiled-coil conformation. A helical membrane pass occupies residues 1308–1328 (FIYAILGVIAIGALIAIIFMA).

It localises to the host membrane. This Ictaluridae (bullhead catfishes) protein is Probable major glycoprotein (ORF46).